Here is a 421-residue protein sequence, read N- to C-terminus: 3-isopropylmalate dehydratase large subunit (421 aa).

[4Fe-4S] cluster contacts are provided by C300, C360, and C363.

The protein belongs to the aconitase/IPM isomerase family. LeuC type 2 subfamily. Heterodimer of LeuC and LeuD. The cofactor is [4Fe-4S] cluster.

It catalyses the reaction (2R,3S)-3-isopropylmalate = (2S)-2-isopropylmalate. It participates in amino-acid biosynthesis; L-leucine biosynthesis; L-leucine from 3-methyl-2-oxobutanoate: step 2/4. Its function is as follows. Catalyzes the isomerization between 2-isopropylmalate and 3-isopropylmalate, via the formation of 2-isopropylmaleate. This chain is 3-isopropylmalate dehydratase large subunit, found in Thermodesulfovibrio yellowstonii (strain ATCC 51303 / DSM 11347 / YP87).